A 453-amino-acid chain; its full sequence is Chromosomal replication initiator protein DnaA (453 aa).

The segment at 1–76 is domain I, interacts with DnaA modulators; the sequence is MSGDAAALWP…LAWRQQLPAV (76 aa). The segment at 76-115 is domain II; it reads VRSVSVRGGVAATERAATLASVPLPTFDAPAAPAANPALL. The interval 116–333 is domain III, AAA+ region; it reads GFDPRLSFDR…GALNKLLAYA (218 aa). 4 residues coordinate ATP: Gly-160, Gly-162, Lys-163, and Thr-164. Residues 334-453 form a domain IV, binds dsDNA region; it reads ALTGARIDLM…IAAIRRSLNS (120 aa).

The protein belongs to the DnaA family. Oligomerizes as a right-handed, spiral filament on DNA at oriC.

The protein localises to the cytoplasm. Its function is as follows. Plays an essential role in the initiation and regulation of chromosomal replication. ATP-DnaA binds to the origin of replication (oriC) to initiate formation of the DNA replication initiation complex once per cell cycle. Binds the DnaA box (a 9 base pair repeat at the origin) and separates the double-stranded (ds)DNA. Forms a right-handed helical filament on oriC DNA; dsDNA binds to the exterior of the filament while single-stranded (ss)DNA is stabiized in the filament's interior. The ATP-DnaA-oriC complex binds and stabilizes one strand of the AT-rich DNA unwinding element (DUE), permitting loading of DNA polymerase. After initiation quickly degrades to an ADP-DnaA complex that is not apt for DNA replication. Binds acidic phospholipids. In Sphingopyxis alaskensis (strain DSM 13593 / LMG 18877 / RB2256) (Sphingomonas alaskensis), this protein is Chromosomal replication initiator protein DnaA.